The sequence spans 638 residues: Chaperone protein DnaK (638 aa).

Thr-198 bears the Phosphothreonine; by autocatalysis mark. The segment at 599–638 (IYESQQAEGGAEGGPSGHHDDGIVDADYEEVKDDNTKKSA) is disordered. The span at 621 to 630 (IVDADYEEVK) shows a compositional bias: acidic residues.

The protein belongs to the heat shock protein 70 family.

Acts as a chaperone. The polypeptide is Chaperone protein DnaK (Allorhizobium ampelinum (strain ATCC BAA-846 / DSM 112012 / S4) (Agrobacterium vitis (strain S4))).